The chain runs to 278 residues: MPIKSFKPVTPSRRNMTSLDYSVLTTDRPEKSLIKTRKKHAGRNNQGVITTRHKGGGHKVKYRIIDFKRNKDNIIGKIATIEYDPNRNAFICLVNYVDGEKRYILAPKTIKVGMQIVSAEKTDIKVGNCMKLKNIPEGTVLHNLELRPGKGGQLARSAGSSVQFLGKDEDGKYVTIRLTSGEVRKVLGECRATVGEVGNEDYALVNWGKAGRNRWRGIRPTVRGSAMNPNDHPHGGGEGKAPVGRKAPMTPWGKKALGVKTRNKKKASTKLIVRRRTK.

A disordered region spans residues 223-278 (RGSAMNPNDHPHGGGEGKAPVGRKAPMTPWGKKALGVKTRNKKKASTKLIVRRRTK). Residues 261 to 278 (TRNKKKASTKLIVRRRTK) show a composition bias toward basic residues.

The protein belongs to the universal ribosomal protein uL2 family. In terms of assembly, part of the 50S ribosomal subunit. Forms a bridge to the 30S subunit in the 70S ribosome.

One of the primary rRNA binding proteins. Required for association of the 30S and 50S subunits to form the 70S ribosome, for tRNA binding and peptide bond formation. It has been suggested to have peptidyltransferase activity; this is somewhat controversial. Makes several contacts with the 16S rRNA in the 70S ribosome. This is Large ribosomal subunit protein uL2 from Spiroplasma kunkelii.